Consider the following 163-residue polypeptide: Large ribosomal subunit protein mL59 (163 aa).

Residues 33-53 form a disordered region; sequence PAGADPETHKTPYQEESPNPF.

Belongs to the mitochondrion-specific ribosomal protein mL59 family. In terms of assembly, component of the mitochondrial large ribosomal subunit (mt-LSU). Mature N.crassa 74S mitochondrial ribosomes consist of a small (37S) and a large (54S) subunit. The 37S small subunit contains a 16S ribosomal RNA (16S mt-rRNA) and 32 different proteins. The 54S large subunit contains a 23S rRNA (23S mt-rRNA) and 42 different proteins.

It localises to the mitochondrion. Functionally, component of the mitochondrial ribosome (mitoribosome), a dedicated translation machinery responsible for the synthesis of mitochondrial genome-encoded proteins, including at least some of the essential transmembrane subunits of the mitochondrial respiratory chain. The mitoribosomes are attached to the mitochondrial inner membrane and translation products are cotranslationally integrated into the membrane. The sequence is that of Large ribosomal subunit protein mL59 (mrpl25) from Neurospora crassa (strain ATCC 24698 / 74-OR23-1A / CBS 708.71 / DSM 1257 / FGSC 987).